The sequence spans 388 residues: Probable pectin lyase F-1 (388 aa).

The first 19 residues, 1–19, serve as a signal peptide directing secretion; sequence MKTATFSTLLALSASAVNA. Residues cysteine 80 and cysteine 103 are joined by a disulfide bond. Asparagine 126 carries an N-linked (GlcNAc...) asparagine glycan. Arginine 253 is a catalytic residue. A disulfide bridge links cysteine 328 with cysteine 336.

It belongs to the polysaccharide lyase 1 family.

Its subcellular location is the secreted. It carries out the reaction Eliminative cleavage of (1-&gt;4)-alpha-D-galacturonan methyl ester to give oligosaccharides with 4-deoxy-6-O-methyl-alpha-D-galact-4-enuronosyl groups at their non-reducing ends.. Its function is as follows. Pectinolytic enzymes consist of four classes of enzymes: pectin lyase, polygalacturonase, pectin methylesterase and rhamnogalacturonase. Among pectinolytic enzymes, pectin lyase is the most important in depolymerization of pectin, since it cleaves internal glycosidic bonds of highly methylated pectins. In Aspergillus terreus (strain NIH 2624 / FGSC A1156), this protein is Probable pectin lyase F-1 (pelF-1).